We begin with the raw amino-acid sequence, 876 residues long: Phosphoenolpyruvate carboxylase (876 aa).

Catalysis depends on residues His138 and Lys543.

This sequence belongs to the PEPCase type 1 family. The cofactor is Mg(2+).

It catalyses the reaction oxaloacetate + phosphate = phosphoenolpyruvate + hydrogencarbonate. Forms oxaloacetate, a four-carbon dicarboxylic acid source for the tricarboxylic acid cycle. The polypeptide is Phosphoenolpyruvate carboxylase (Aliivibrio salmonicida (strain LFI1238) (Vibrio salmonicida (strain LFI1238))).